Consider the following 259-residue polypeptide: UPF0246 protein PLES_14941 (259 aa).

Belongs to the UPF0246 family.

In Pseudomonas aeruginosa (strain LESB58), this protein is UPF0246 protein PLES_14941.